Consider the following 157-residue polypeptide: Deoxyuridine 5'-triphosphate nucleotidohydrolase (157 aa).

Residues 73–75 (RSG), Asn-86, and 90–92 (TID) each bind substrate.

Belongs to the dUTPase family. Mg(2+) is required as a cofactor.

The catalysed reaction is dUTP + H2O = dUMP + diphosphate + H(+). The protein operates within pyrimidine metabolism; dUMP biosynthesis; dUMP from dCTP (dUTP route): step 2/2. Its function is as follows. This enzyme is involved in nucleotide metabolism: it produces dUMP, the immediate precursor of thymidine nucleotides and it decreases the intracellular concentration of dUTP so that uracil cannot be incorporated into DNA. The sequence is that of Deoxyuridine 5'-triphosphate nucleotidohydrolase from Azorhizobium caulinodans (strain ATCC 43989 / DSM 5975 / JCM 20966 / LMG 6465 / NBRC 14845 / NCIMB 13405 / ORS 571).